Reading from the N-terminus, the 121-residue chain is UPF0091 protein PH1428 (121 aa).

Belongs to the UPF0091 family.

The protein is UPF0091 protein PH1428 of Pyrococcus horikoshii (strain ATCC 700860 / DSM 12428 / JCM 9974 / NBRC 100139 / OT-3).